A 621-amino-acid polypeptide reads, in one-letter code: tRNA uridine 5-carboxymethylaminomethyl modification enzyme MnmG (621 aa).

8-13 (GAGHAG) provides a ligand contact to FAD. Residue 269 to 283 (GPRYCPSVEDKIFRF) coordinates NAD(+).

Belongs to the MnmG family. In terms of assembly, homodimer. Heterotetramer of two MnmE and two MnmG subunits. It depends on FAD as a cofactor.

Its subcellular location is the cytoplasm. NAD-binding protein involved in the addition of a carboxymethylaminomethyl (cmnm) group at the wobble position (U34) of certain tRNAs, forming tRNA-cmnm(5)s(2)U34. The sequence is that of tRNA uridine 5-carboxymethylaminomethyl modification enzyme MnmG from Chlorobium chlorochromatii (strain CaD3).